The chain runs to 337 residues: Glyceraldehyde-3-phosphate dehydrogenase (337 aa).

Residues 11-12 (TI) and Gly111 each bind NAD(+). 140–142 (SCN) lines the D-glyceraldehyde 3-phosphate pocket. Catalysis depends on Cys141, which acts as the Nucleophile. Arg169 is a binding site for NAD(+). The tract at residues 177 to 196 (KKGPINSIVPTTEVPSHHGP) is disordered. 194–195 (HG) is a D-glyceraldehyde 3-phosphate binding site. Gln301 contributes to the NAD(+) binding site.

Belongs to the glyceraldehyde-3-phosphate dehydrogenase family. Homotetramer.

The protein localises to the cytoplasm. The enzyme catalyses D-glyceraldehyde 3-phosphate + phosphate + NADP(+) = (2R)-3-phospho-glyceroyl phosphate + NADPH + H(+). It catalyses the reaction D-glyceraldehyde 3-phosphate + phosphate + NAD(+) = (2R)-3-phospho-glyceroyl phosphate + NADH + H(+). Its pathway is carbohydrate degradation; glycolysis; pyruvate from D-glyceraldehyde 3-phosphate: step 1/5. The chain is Glyceraldehyde-3-phosphate dehydrogenase from Methanosphaera stadtmanae (strain ATCC 43021 / DSM 3091 / JCM 11832 / MCB-3).